Here is a 467-residue protein sequence, read N- to C-terminus: 55 kDa erythrocyte membrane protein (467 aa).

The PDZ domain maps to 73–154 (EVAFEKNQSE…VVTMKIIPRP (82 aa)). One can recognise an SH3 domain in the interval 160–230 (PCEMYMRGQF…PSPELQEWRA (71 aa)). The region spanning 283–452 (RKTLVLIGAP…SVKIVEEALE (170 aa)) is the Guanylate kinase-like domain.

The protein belongs to the MAGUK family. In terms of processing, extensively palmitoylated.

It is found in the membrane. May play a role in the regulation of neutrophil polarization. The polypeptide is 55 kDa erythrocyte membrane protein (mpp1) (Takifugu rubripes (Japanese pufferfish)).